The following is a 189-amino-acid chain: Protein osa (189 aa).

Suppression of A.tumefaciens oncogenicity. This Shigella flexneri protein is Protein osa (osa).